The primary structure comprises 93 residues: UPF0223 protein str0998 (93 aa).

Belongs to the UPF0223 family.

The protein is UPF0223 protein str0998 of Streptococcus thermophilus (strain CNRZ 1066).